Here is a 1214-residue protein sequence, read N- to C-terminus: Brassinosteroid LRR receptor kinase BRL3 (1214 aa).

An N-terminal signal peptide occupies residues 1-29 (MAAVRVVAPAPSVLLLVAAAVVLLHLARA). A glycan (N-linked (GlcNAc...) asparagine) is linked at Asn-61. The Cys pair 1 signature appears at 69–76 (CAWAGVSC). 22 LRR repeats span residues 103–127 (LSALRRLDLRGNAFHGDLSRHGSPR), 131–155 (PCALVEVDISSNTFNGTLPRAFLAS), 156–177 (CGGLQTLNLSRNSLTGGGYPFP), 178–202 (PSLRRLDMSRNQLSDAGLLNYSLTG), 204–228 (HGIQYLNLSANQFTGSLPGLAPCTE), 230–250 (SVLDLSWNLMSGVLPPRFVAM), 252–276 (PANLTYLSIAGNNFSMDISDYEFGG), 277–302 (CANLTLLDWSYNRLRSTGLPRSLVDC), 303–325 (RRLEALDMSGNKLLSGPIPTFLV), 327–351 (LQALRRLSLAGNRFTGEISDKLSIL), 353–375 (KTLVELDLSSNQLIGSLPASFGQ), 377–400 (RFLQVLDLGNNQLSGDFVETVITN), 401–427 (ISSLRVLRLPFNNITGANPLPALASRC), 429–451 (LLEVIDLGSNEFDGEIMPDLCSS), 452–476 (LPSLRKLLLPNNYINGTVPSSLSNC), 478–500 (NLESIDLSFNLLVGQIPPEILFL), 502–525 (KLVDLVLWANNLSGEIPDKFCFNS), 526–549 (TALETLVISYNSFTGNIPESITRC), 550–572 (VNLIWLSLAGNNLTGSIPSGFGN), 573–597 (LQNLAILQLNKNSLSGKVPAELGSC), 599–621 (NLIWLDLNSNELTGTIPPQLAAQ), and 650–673 (GVLFEFLDIRPDRLANFPAVHLCS). Asn-145, Asn-163, Asn-197, and Asn-210 each carry an N-linked (GlcNAc...) asparagine glycan. Asn-254, Asn-264, and Asn-279 each carry an N-linked (GlcNAc...) asparagine glycan. Asn-400 and Asn-413 each carry an N-linked (GlcNAc...) asparagine glycan. Asn-466 is a glycosylation site (N-linked (GlcNAc...) asparagine). N-linked (GlcNAc...) asparagine glycosylation is found at Asn-512 and Asn-524. Asn-561 carries N-linked (GlcNAc...) asparagine glycosylation. Tyr-678 is a binding site for brassinolide. 4 LRR repeats span residues 689 to 712 (NGSMIFLDLSYNSLTGTIPASFGN), 713 to 736 (MTYLEVLNLGHNELTGAIPDAFTG), 738 to 760 (KGIGALDLSHNHLTGVIPPGFGC), and 762 to 786 (HFLADFDVSNNNLTGEIPTSGQLIT). Residues 799-806 (CGIPLNPC) carry the Cys pair 2 motif. A helical membrane pass occupies residues 829–849 (SVFLAVTLSVLILFSLLIIHY). The Protein kinase domain maps to 913 to 1196 (FCAETLIGSG…FQVDSGSNFL (284 aa)). ATP is bound by residues 919 to 927 (IGSGGFGEV), Lys-941, 987 to 989 (EYM), 993 to 996 (SLDF), 1039 to 1044 (DMKSSN), and Asp-1057. Catalysis depends on Asp-1039, which acts as the Proton acceptor.

This sequence belongs to the protein kinase superfamily. Ser/Thr protein kinase family. Highly expressed in roots. Expressed at low levels in shoots.

It is found in the cell membrane. It catalyses the reaction L-seryl-[protein] + ATP = O-phospho-L-seryl-[protein] + ADP + H(+). It carries out the reaction L-threonyl-[protein] + ATP = O-phospho-L-threonyl-[protein] + ADP + H(+). Functionally, may be involved in brassenosteroid (BR) perception in roots. This Oryza sativa subsp. japonica (Rice) protein is Brassinosteroid LRR receptor kinase BRL3.